Here is a 568-residue protein sequence, read N- to C-terminus: Nitrite reductase (568 aa).

A signal peptide spans 1-25; it reads MPFGKPLVGTLLASLTLLGLATAHA. The interval 26–54 is N-terminal tail; the sequence is KDDMKAAEQYQGAASAVDPAHVVRTNGAP. One can recognise a Cytochrome c domain in the interval 55-140; it reads DMSESEFNEA…AKYIQHTPPQ (86 aa). Residues Cys-72, Cys-75, His-76, Arg-96, Thr-109, and Met-113 each contribute to the heme c site. Positions 141-568 are D1-heme domain; it reads PPEWGMPEMR…NVYNTQHDVY (428 aa). Heme d1 contacts are provided by His-207, Arg-250, Ser-251, Tyr-270, Arg-397, and Gln-508.

Homodimer. Requires heme c as cofactor. Heme is required as a cofactor.

The protein localises to the periplasm. The catalysed reaction is nitric oxide + Fe(III)-[cytochrome c] + H2O = Fe(II)-[cytochrome c] + nitrite + 2 H(+). It carries out the reaction A + NH4(+) + H2O = hydroxylamine + AH2 + H(+). The chain is Nitrite reductase (nirS) from Pseudomonas aeruginosa (strain ATCC 15692 / DSM 22644 / CIP 104116 / JCM 14847 / LMG 12228 / 1C / PRS 101 / PAO1).